A 495-amino-acid polypeptide reads, in one-letter code: YTH domain-containing protein ECT3 (495 aa).

The YTH domain maps to 261 to 398 (AKFYVIKSYS…EQGIKVIKIF (138 aa)). RNA contacts are provided by residues 267–269 (KSY), D273, 283–284 (WS), N316, W340, W345, and W353.

Expressed in the shoot apex, at the sites of leaf formation, and in emerging leaves.

It is found in the cytoplasm. Its function is as follows. Specifically recognizes and binds N6-methyladenosine (m6A)-containing RNAs, and regulates mRNA stability. M6A is a modification present at internal sites of mRNAs and some non-coding RNAs and plays a role in mRNA stability and processing. Required for the correct timing of leaf formation and normal leaf morphology. Required for proper trichome branching and morphology. Functions redundantly with ECT2. This is YTH domain-containing protein ECT3 from Arabidopsis thaliana (Mouse-ear cress).